A 161-amino-acid polypeptide reads, in one-letter code: Nucleotide-binding protein AZOSEA28950 (161 aa).

This sequence belongs to the YajQ family.

Functionally, nucleotide-binding protein. This Aromatoleum aromaticum (strain DSM 19018 / LMG 30748 / EbN1) (Azoarcus sp. (strain EbN1)) protein is Nucleotide-binding protein AZOSEA28950.